Reading from the N-terminus, the 254-residue chain is Ribosomal RNA small subunit methyltransferase J (254 aa).

S-adenosyl-L-methionine is bound by residues 107-108, 123-124, and Asp-174; these read RD and ER.

Belongs to the methyltransferase superfamily. RsmJ family.

Its subcellular location is the cytoplasm. It carries out the reaction guanosine(1516) in 16S rRNA + S-adenosyl-L-methionine = N(2)-methylguanosine(1516) in 16S rRNA + S-adenosyl-L-homocysteine + H(+). Its function is as follows. Specifically methylates the guanosine in position 1516 of 16S rRNA. This chain is Ribosomal RNA small subunit methyltransferase J, found in Coxiella burnetii (strain Dugway 5J108-111).